A 509-amino-acid chain; its full sequence is Photosystem II CP47 reaction center protein (509 aa).

Transmembrane regions (helical) follow at residues Ala21–Ser36, Ile101–Trp115, Gly140–Phe156, Ile203–Thr218, Val237–Thr252, and Asn457–Arg472.

Belongs to the PsbB/PsbC family. PsbB subfamily. As to quaternary structure, PSII is composed of 1 copy each of membrane proteins PsbA, PsbB, PsbC, PsbD, PsbE, PsbF, PsbH, PsbI, PsbJ, PsbK, PsbL, PsbM, PsbT, PsbX, PsbY, PsbZ, Psb30/Ycf12, at least 3 peripheral proteins of the oxygen-evolving complex and a large number of cofactors. It forms dimeric complexes. The cofactor is Binds multiple chlorophylls. PSII binds additional chlorophylls, carotenoids and specific lipids..

Its subcellular location is the plastid. The protein localises to the chloroplast thylakoid membrane. Functionally, one of the components of the core complex of photosystem II (PSII). It binds chlorophyll and helps catalyze the primary light-induced photochemical processes of PSII. PSII is a light-driven water:plastoquinone oxidoreductase, using light energy to abstract electrons from H(2)O, generating O(2) and a proton gradient subsequently used for ATP formation. The chain is Photosystem II CP47 reaction center protein from Porphyra purpurea (Red seaweed).